The following is a 280-amino-acid chain: Killer cell lectin-like receptor 7 (280 aa).

Residues Met1–Lys44 are Cytoplasmic-facing. The helical; Signal-anchor for type II membrane protein transmembrane segment at Leu45–Ile66 threads the bilayer. Topologically, residues Thr67–His280 are extracellular. N-linked (GlcNAc...) asparagine glycosylation is present at Asn104. A C-type lectin domain is found at Gly156–Leu275. Disulfide bonds link Cys163–Cys168, Cys181–Cys269, Cys185–Cys271, and Cys250–Cys263. A glycan (N-linked (GlcNAc...) asparagine) is linked at Asn239.

Homodimer; disulfide-linked.

It is found in the membrane. Its function is as follows. Receptor on natural killer (NK) cells for class I MHC. The polypeptide is Killer cell lectin-like receptor 7 (Klra7) (Mus musculus (Mouse)).